A 161-amino-acid chain; its full sequence is E3 ubiquitin ligase complex SCF subunit sconC (161 aa).

The interaction with the F-box domain of F-box proteins stretch occupies residues 102–161 (ILAANYLDIKPLLDIGCKTVANMIKGKSPEEIRKTFNIQNDFTPEEEDQIRRENEWAEDR).

Belongs to the SKP1 family. As to quaternary structure, component of the SCF (SKP1-CUL1-F-box protein) E3 ubiquitin ligase complexes.

The protein operates within protein modification; protein ubiquitination. In terms of biological role, essential component of the SCF (SKP1-CUL1-F-box protein) E3 ubiquitin ligase complexes, which mediate the ubiquitination and subsequent proteasomal degradation of target proteins. Controls sulfur metabolite repression, probably by mediating the inactivation or degradation of the metR transcription factor. The sequence is that of E3 ubiquitin ligase complex SCF subunit sconC (sconC) from Emericella nidulans (strain FGSC A4 / ATCC 38163 / CBS 112.46 / NRRL 194 / M139) (Aspergillus nidulans).